A 246-amino-acid chain; its full sequence is Ly6/PLAUR domain-containing protein 4 (246 aa).

The first 26 residues, 1–26, serve as a signal peptide directing secretion; that stretch reads MGPQHLRLVQLFCLLGAISTLPRAGA. Asparagine 117 carries N-linked (GlcNAc...) asparagine glycosylation. A UPAR/Ly6 domain is found at 142-223; that stretch reads CPTCVGEHMK…LNILEKSQIV (82 aa). Alanine 225 carries GPI-anchor amidated alanine lipidation. A propeptide spans 226–246 (removed in mature form); the sequence is ASSRQDPAWGVVLGLLFAFRD.

Its subcellular location is the cell membrane. The chain is Ly6/PLAUR domain-containing protein 4 (LYPD4) from Homo sapiens (Human).